We begin with the raw amino-acid sequence, 544 residues long: uncharacterized protein (544 aa).

The first 22 residues, 1–22 (MYFSQNAIILVMLMFVISAVFY), serve as a signal peptide directing secretion.

This is an uncharacterized protein from Methanocaldococcus jannaschii (strain ATCC 43067 / DSM 2661 / JAL-1 / JCM 10045 / NBRC 100440) (Methanococcus jannaschii).